The primary structure comprises 193 residues: Threonylcarbamoyl-AMP synthase (193 aa).

The YrdC-like domain occupies 14–193; sequence SRLQQRARKQ…IDLESGRVLR (180 aa).

Belongs to the SUA5 family. TsaC subfamily.

It is found in the cytoplasm. The catalysed reaction is L-threonine + hydrogencarbonate + ATP = L-threonylcarbamoyladenylate + diphosphate + H2O. In terms of biological role, required for the formation of a threonylcarbamoyl group on adenosine at position 37 (t(6)A37) in tRNAs that read codons beginning with adenine. Catalyzes the conversion of L-threonine, HCO(3)(-)/CO(2) and ATP to give threonylcarbamoyl-AMP (TC-AMP) as the acyladenylate intermediate, with the release of diphosphate. The chain is Threonylcarbamoyl-AMP synthase from Chromobacterium violaceum (strain ATCC 12472 / DSM 30191 / JCM 1249 / CCUG 213 / NBRC 12614 / NCIMB 9131 / NCTC 9757 / MK).